A 117-amino-acid chain; its full sequence is uncharacterized protein (117 aa).

The segment at 96–117 is disordered; it reads RKGGASKHRTLSAETGIRGEGE.

This is an uncharacterized protein from Saccharomyces cerevisiae (strain ATCC 204508 / S288c) (Baker's yeast).